A 202-amino-acid chain; its full sequence is Dephospho-CoA kinase (202 aa).

The region spanning 5–202 is the DPCK domain; it reads ILGLTGGIGS…FYLTLRGGQP (198 aa). Residue 13-18 coordinates ATP; that stretch reads GSGKSA.

This sequence belongs to the CoaE family.

The protein resides in the cytoplasm. It catalyses the reaction 3'-dephospho-CoA + ATP = ADP + CoA + H(+). Its pathway is cofactor biosynthesis; coenzyme A biosynthesis; CoA from (R)-pantothenate: step 5/5. Functionally, catalyzes the phosphorylation of the 3'-hydroxyl group of dephosphocoenzyme A to form coenzyme A. The protein is Dephospho-CoA kinase of Stutzerimonas stutzeri (Pseudomonas stutzeri).